The sequence spans 150 residues: Phosphopantetheine adenylyltransferase (150 aa).

Threonine 9 contributes to the substrate binding site. ATP contacts are provided by residues 9–10 (TF) and histidine 17. Lysine 41, threonine 73, and arginine 87 together coordinate substrate. Residues 88-90 (GIR), glutamate 98, and 122-128 (LTCVSST) contribute to the ATP site.

It belongs to the bacterial CoaD family. Homohexamer. Mg(2+) serves as cofactor.

The protein localises to the cytoplasm. The catalysed reaction is (R)-4'-phosphopantetheine + ATP + H(+) = 3'-dephospho-CoA + diphosphate. Its pathway is cofactor biosynthesis; coenzyme A biosynthesis; CoA from (R)-pantothenate: step 4/5. Functionally, reversibly transfers an adenylyl group from ATP to 4'-phosphopantetheine, yielding dephospho-CoA (dPCoA) and pyrophosphate. This is Phosphopantetheine adenylyltransferase from Bacteroides fragilis (strain ATCC 25285 / DSM 2151 / CCUG 4856 / JCM 11019 / LMG 10263 / NCTC 9343 / Onslow / VPI 2553 / EN-2).